A 668-amino-acid chain; its full sequence is UvrABC system protein B (668 aa).

In terms of domain architecture, Helicase ATP-binding spans 25-176 (THLQSGHSRQ…DQRQLLRNLA (152 aa)). 38–45 (GATGTGKT) provides a ligand contact to ATP. A Beta-hairpin motif is present at residues 91–114 (YYDYYQPEAYIPVTDTFIEKTASI). The Helicase C-terminal domain maps to 429–591 (QVDDLLAEIQ…ITPQPVKKGS (163 aa)). The UVR domain occupies 626–661 (PELITQLEAQMKEAAKNLEFEEAAKYRDRIKNLRSK).

The protein belongs to the UvrB family. As to quaternary structure, forms a heterotetramer with UvrA during the search for lesions. Interacts with UvrC in an incision complex.

It localises to the cytoplasm. The UvrABC repair system catalyzes the recognition and processing of DNA lesions. A damage recognition complex composed of 2 UvrA and 2 UvrB subunits scans DNA for abnormalities. Upon binding of the UvrA(2)B(2) complex to a putative damaged site, the DNA wraps around one UvrB monomer. DNA wrap is dependent on ATP binding by UvrB and probably causes local melting of the DNA helix, facilitating insertion of UvrB beta-hairpin between the DNA strands. Then UvrB probes one DNA strand for the presence of a lesion. If a lesion is found the UvrA subunits dissociate and the UvrB-DNA preincision complex is formed. This complex is subsequently bound by UvrC and the second UvrB is released. If no lesion is found, the DNA wraps around the other UvrB subunit that will check the other stand for damage. This Acaryochloris marina (strain MBIC 11017) protein is UvrABC system protein B.